The chain runs to 1213 residues: MVDVNRFKSMQITLASPSKVRSWSYGEVKKPETINYRTLKPEREGLFDEVIFGPTKDWECACGKYKRIRYKGIVCDRCGVEVTRAKVRRERMGHIELKAPVSHIWYFKGIPSRMGLTLDMSPRALEEVIYFAAYVVIDPKDTPLEPKSLLTEREYREKLQEYGHGSFVAKMGAEAIQDLLKRVDLAAEIAELKEELKSASGQKRIKAVRRLDVLDAFNKSGNKPEWMVLNILPVIPPDLRPMVQLDGGRFAASDLNDLYRRVINRNNRLARLLELNAPGIIVQNEKRMLQEAVDALIDNGRRGRPITGPGSRPLKSLSHMLKGKQGRFRQNLLGKRVDFSGRSVIAVGPTLKMYQCGVPREMAIELFKPFVMREIVAKEYAGNVKAAKRMVERGDERIWDILEEVIKEHPVLLNRAPTLHRLGIQAFEPVLIDGKALRLHPLVCEAYNADFDGDQMAIHVPLSEEAQAEARLLMLAAEHILNPKDGKPVVTPSQDMVLGNYYLTMEDAGREGEGMIFKDKDEAVMAYRNGYAHLHSRVGIAVDSMPNKPWKDNQRHKIMVTTVGKILFNDIMPEDLPYLQEPNNANLTEGTPDKYFLEPGQDIQEVIDRLDINVPFKKKNLGNIIAETFKRFRTTETSAFLDRLKDLGYYHSTLAGLTVGIADIPVIDNKAEIIDAAHHRVEEINKAFRRGLMTDDDRYVAVTTTWREAKEALEKRLIETQDPKNPIVMMMDSGARGNISNFSQLAGMRGLMAAPNGRIMELPILSNFREGLSVLEMFFSTHGARKGMTDTALKTADSGYLTRRLVDVAQDVIIREDDCGTDRGLLIRAITDGKEVTETLEERLQGRYTRKSVKHPETGEVLIGADQLITEDMARKIVDAGVEEVTIRSVFTCATRHGVCRHCYGINLATGDAVEVGEAVGTIAAQSIGEPGTQLTMRTFHTGGVASNTDITQGLPRIQEIFEARNPKGEAVITEVKGNVVEIEEDASTRTKKVYVQGKTGMGEYVIPFTARMKVEVGDEVNRGAALTEGSIQPKRLLEVRDTLSVETYLLAEVQKVYRSQGVEIGDKHVEVMVRQMLRKVRVMDPGDTDLLPGTLMDISDFTDANKDIVISGGIPATSRPVLMGITKASLETNSFLSAASFQETTRVLTDAAIRGKKDHLLGLKENVIIGKIIPAGTGMARYRNIEPQAMNEIEVIDHTEVSAEAVFTAEAE.

The Zn(2+) site is built by Cys-60, Cys-62, Cys-75, and Cys-78. The Mg(2+) site is built by Asp-450, Asp-452, and Asp-454. The Zn(2+) site is built by Cys-819, Cys-893, Cys-900, and Cys-903.

It belongs to the RNA polymerase beta' chain family. In terms of assembly, the RNAP catalytic core consists of 2 alpha, 1 beta, 1 beta' and 1 omega subunit. When a sigma factor is associated with the core the holoenzyme is formed, which can initiate transcription. It depends on Mg(2+) as a cofactor. Requires Zn(2+) as cofactor.

The enzyme catalyses RNA(n) + a ribonucleoside 5'-triphosphate = RNA(n+1) + diphosphate. Functionally, DNA-dependent RNA polymerase catalyzes the transcription of DNA into RNA using the four ribonucleoside triphosphates as substrates. In Streptococcus pyogenes serotype M1, this protein is DNA-directed RNA polymerase subunit beta'.